Consider the following 83-residue polypeptide: Gas vesicle protein G1 (83 aa).

This sequence belongs to the gas vesicle GvpG family. In terms of assembly, gvpF to GvpM interact with each other in vitro, and may form multi-subunit complex(es). Might interact with GvpA1.

Its subcellular location is the gas vesicle. Functionally, proteins GvpF to GvpM might be involved in nucleating gas vesicle formation. A minor component of the gas vesicle. Gas vesicles are hollow, gas filled proteinaceous nanostructures found in several microbial planktonic microorganisms. They allow positioning of halobacteria at the optimal depth for growth in the poorly aerated, shallow brine pools of their habitat. Its function is as follows. Expression of a 9.5 kb p-vac DNA fragment containing 2 divergently transcribed regions (gvpD-gvpE-gvpF-gvpG-gvpH-gvpI-gvpJ-gvpK-gvpL-gvpM and gvpA-gvpC-gvpN-gvpO) allows H.volcanii to produce gas vesicles. A minimal gas vesicle can be made in H.volcanii by gvpA1-gvpO1 plus gvpF1-gvpG1-gvpJ1-gvpK1-gvpL1-gvpM1; lack of enough GvpJ1 prevents formation. A similar region restores gas vesicle production in H.halobium without the p-vac locus, but it still has the c-vac locus. This is Gas vesicle protein G1 (gvpG11) from Halobacterium salinarum (strain ATCC 700922 / JCM 11081 / NRC-1) (Halobacterium halobium).